The sequence spans 329 residues: Ficolin-2 (329 aa).

The N-terminal stretch at 1–29 (MELGGAAGALGPSGPLLVCLCFGTLAAQA) is a signal peptide. Residues 52–111 (GCPGLPGAPGLKGETGAAGLKGERGLPGVPGKAGPAGPKGSTGAQGEKGARGEKGESGQL) form the Collagen-like domain. Residues 64–113 (GETGAAGLKGERGLPGVPGKAGPAGPKGSTGAQGEKGARGEKGESGQLHS) form a disordered region. Positions 77–90 (LPGVPGKAGPAGPK) are enriched in low complexity. The 218-residue stretch at 112–329 (HSCATGPRTC…KVSEMKLRLT (218 aa)) folds into the Fibrinogen C-terminal domain. Disulfide bonds link Cys114–Cys142 and Cys121–Cys149. Residues Asp265, Asp267, Ser269, and Ser271 each contribute to the Ca(2+) site. Cys273 and Cys286 form a disulfide bridge. Asn316 carries an N-linked (GlcNAc...) asparagine glycan.

Belongs to the ficolin lectin family. Homotrimer. Interacts with elastin. Interacts with MASP1 and MASP2.

The protein resides in the secreted. May function in innate immunity through activation of the lectin complement pathway. Calcium-dependent and GlcNAc-binding lectin. The protein is Ficolin-2 (FCN2) of Bos taurus (Bovine).